A 427-amino-acid polypeptide reads, in one-letter code: Adenylosuccinate synthetase (427 aa).

GTP contacts are provided by residues 12–18 (GDEGKGK) and 40–42 (GHT). Asp-13 acts as the Proton acceptor in catalysis. Mg(2+) contacts are provided by Asp-13 and Gly-40. Residues 13–16 (DEGK), 38–41 (NAGH), Thr-130, Arg-144, Gln-224, Thr-239, and Arg-303 each bind IMP. His-41 (proton donor) is an active-site residue. Residue 299 to 305 (VTTGRAR) participates in substrate binding. Residues Arg-305, 331-333 (KID), and 413-415 (SVG) contribute to the GTP site.

Belongs to the adenylosuccinate synthetase family. As to quaternary structure, homodimer. The cofactor is Mg(2+).

Its subcellular location is the cytoplasm. It catalyses the reaction IMP + L-aspartate + GTP = N(6)-(1,2-dicarboxyethyl)-AMP + GDP + phosphate + 2 H(+). The protein operates within purine metabolism; AMP biosynthesis via de novo pathway; AMP from IMP: step 1/2. Functionally, plays an important role in the de novo pathway of purine nucleotide biosynthesis. Catalyzes the first committed step in the biosynthesis of AMP from IMP. This chain is Adenylosuccinate synthetase, found in Clostridium novyi (strain NT).